We begin with the raw amino-acid sequence, 441 residues long: Protein disulfide isomerase-like 2-3 (441 aa).

A signal peptide spans 1 to 18; sequence MRPAVAAALLLVAAAVAA. 2 Thioredoxin domains span residues 19 to 139 and 159 to 276; these read SPVS…ALLR and SEKT…ANAA. Catalysis depends on nucleophile residues C59 and C62. Cysteines 59 and 62 form a disulfide. The disordered stretch occupies residues 143–166; that stretch reads NGKTSAGSGGKKSGGSSEKTEPSA. Residues C195 and C198 each act as nucleophile in the active site. The cysteines at positions 195 and 198 are disulfide-linked.

This sequence belongs to the protein disulfide isomerase family.

It is found in the endoplasmic reticulum lumen. The enzyme catalyses Catalyzes the rearrangement of -S-S- bonds in proteins.. Functionally, acts as a protein-folding catalyst that interacts with nascent polypeptides to catalyze the formation, isomerization, and reduction or oxidation of disulfide bonds. May play a role in storage protein biogenesis. This is Protein disulfide isomerase-like 2-3 (PDIL2-3) from Oryza sativa subsp. japonica (Rice).